Reading from the N-terminus, the 390-residue chain is Matrix metalloproteinase-23 (390 aa).

At 1–19 the chain is on the cytoplasmic side; sequence MGRGARVPSEAPGAGVERR. Positions 1–78 are excised as a propeptide; the sequence is MGRGARVPSE…PGPLAPRRRR (78 aa). The chain crosses the membrane as a helical; Signal-anchor for type II membrane protein span at residues 20-40; the sequence is WLGAALVALCLLPALVLLARL. Residues 41–390 are Lumenal-facing; sequence GAPAVPAWSA…TYSWRVRVRG (350 aa). Residues N92 and N148 are each glycosylated (N-linked (GlcNAc...) asparagine). H211 is a binding site for Zn(2+). Residue E212 is part of the active site. Zn(2+)-binding residues include H215 and H221. A glycan (N-linked (GlcNAc...) asparagine) is linked at N232. The region spanning 255 to 289 is the ShKT domain; it reads CLDRLFVCASWARRGFCDARRRLMKRLCPSSCDFC. Intrachain disulfides connect C255–C289, C262–C282, and C271–C286. The region spanning 295 to 380 is the Ig-like C2-type domain; that stretch reads PTVATTPPPP…VVRRQQRVLT (86 aa). The N-linked (GlcNAc...) asparagine glycan is linked to N316. C321 and C370 are joined by a disulfide.

The protein belongs to the peptidase M10A family. Zn(2+) serves as cofactor. N-glycosylated. Post-translationally, proteolytic cleavage might yield an active form. As to expression, predominantly expressed in ovary, testis and prostate.

The protein resides in the endoplasmic reticulum membrane. It localises to the membrane. With respect to regulation, inhibited by TIMP2. Protease. May regulate the surface expression of some potassium channels by retaining them in the endoplasmic reticulum. The polypeptide is Matrix metalloproteinase-23 (MMP23B) (Homo sapiens (Human)).